The primary structure comprises 185 residues: Ribosome-recycling factor (185 aa).

This sequence belongs to the RRF family.

Its subcellular location is the cytoplasm. Responsible for the release of ribosomes from messenger RNA at the termination of protein biosynthesis. May increase the efficiency of translation by recycling ribosomes from one round of translation to another. In Pasteurella multocida (strain Pm70), this protein is Ribosome-recycling factor.